Reading from the N-terminus, the 180-residue chain is ATP synthase subunit delta (180 aa).

Belongs to the ATPase delta chain family. In terms of assembly, F-type ATPases have 2 components, F(1) - the catalytic core - and F(0) - the membrane proton channel. F(1) has five subunits: alpha(3), beta(3), gamma(1), delta(1), epsilon(1). F(0) has three main subunits: a(1), b(2) and c(10-14). The alpha and beta chains form an alternating ring which encloses part of the gamma chain. F(1) is attached to F(0) by a central stalk formed by the gamma and epsilon chains, while a peripheral stalk is formed by the delta and b chains.

The protein localises to the cell membrane. In terms of biological role, f(1)F(0) ATP synthase produces ATP from ADP in the presence of a proton or sodium gradient. F-type ATPases consist of two structural domains, F(1) containing the extramembraneous catalytic core and F(0) containing the membrane proton channel, linked together by a central stalk and a peripheral stalk. During catalysis, ATP synthesis in the catalytic domain of F(1) is coupled via a rotary mechanism of the central stalk subunits to proton translocation. This protein is part of the stalk that links CF(0) to CF(1). It either transmits conformational changes from CF(0) to CF(1) or is implicated in proton conduction. The chain is ATP synthase subunit delta from Ligilactobacillus salivarius (strain UCC118) (Lactobacillus salivarius).